A 174-amino-acid polypeptide reads, in one-letter code: 3-hydroxyanthranilate 3,4-dioxygenase (174 aa).

Arginine 47 is a binding site for O2. Residues histidine 51, glutamate 57, and histidine 95 each coordinate Fe cation. Glutamate 57 contributes to the substrate binding site. Substrate is bound by residues arginine 99 and glutamate 110. Residues cysteine 125, cysteine 128, cysteine 162, and cysteine 165 each coordinate Fe cation.

It belongs to the 3-HAO family. Homodimer. Fe(2+) is required as a cofactor.

The catalysed reaction is 3-hydroxyanthranilate + O2 = (2Z,4Z)-2-amino-3-carboxymuconate 6-semialdehyde. It functions in the pathway cofactor biosynthesis; NAD(+) biosynthesis; quinolinate from L-kynurenine: step 3/3. In terms of biological role, catalyzes the oxidative ring opening of 3-hydroxyanthranilate to 2-amino-3-carboxymuconate semialdehyde, which spontaneously cyclizes to quinolinate. The protein is 3-hydroxyanthranilate 3,4-dioxygenase of Burkholderia lata (strain ATCC 17760 / DSM 23089 / LMG 22485 / NCIMB 9086 / R18194 / 383).